The primary structure comprises 461 residues: Zinc finger protein ZFP2 (461 aa).

13 consecutive C2H2-type zinc fingers follow at residues 102–124, 130–152, 158–180, 186–208, 214–236, 242–264, 270–292, 298–320, 326–348, 354–376, 382–404, 410–432, and 438–460; these read YECNQCSKTFSQSSSLLKHQRIH, YKCNVCGKHFIERSSLTVHQRIH, YKCNECGKAFSQSMNLTVHQRTH, YQCKECGKAFHKNSSLIQHERIH, YKCNECGKAFTQSMNLTVHQRTH, YECNECGKAFSQSMHLIVHQRSH, YECSQCGKAFSKSSTLTLHQRNH, YKCNKCGKSFSQSTYLIEHQRLH, FECNECGKAFSKNSSLTQHRRIH, YECMVCGKHFTGRSSLTVHQVIH, YECNECGKAFSQSAYLIEHQRIH, YECDQCGKAFIKNSSLTVHQRTH, and YQCNECGKAFSRSTNLTRHQRTH.

This sequence belongs to the krueppel C2H2-type zinc-finger protein family.

The protein resides in the nucleus. Functionally, probable transcription factor involved in neuronal differentiation and/or phenotypic maintenance. This chain is Zinc finger protein ZFP2 (ZFP2), found in Homo sapiens (Human).